The primary structure comprises 475 residues: Ribulose bisphosphate carboxylase large chain (475 aa).

Positions 1–2 (MS) are excised as a propeptide. Proline 3 carries the post-translational modification N-acetylproline. Residue lysine 14 is modified to N6,N6,N6-trimethyllysine. Residues asparagine 123 and threonine 173 each coordinate substrate. Lysine 175 functions as the Proton acceptor in the catalytic mechanism. A substrate-binding site is contributed by lysine 177. Lysine 201, aspartate 203, and glutamate 204 together coordinate Mg(2+). Lysine 201 carries the N6-carboxylysine modification. The active-site Proton acceptor is histidine 294. Histidine 327 and serine 379 together coordinate substrate.

Belongs to the RuBisCO large chain family. Type I subfamily. In terms of assembly, heterohexadecamer of 8 large chains and 8 small chains; disulfide-linked. The disulfide link is formed within the large subunit homodimers. Mg(2+) serves as cofactor. In terms of processing, the disulfide bond which can form in the large chain dimeric partners within the hexadecamer appears to be associated with oxidative stress and protein turnover.

Its subcellular location is the plastid. It is found in the chloroplast. It catalyses the reaction 2 (2R)-3-phosphoglycerate + 2 H(+) = D-ribulose 1,5-bisphosphate + CO2 + H2O. The catalysed reaction is D-ribulose 1,5-bisphosphate + O2 = 2-phosphoglycolate + (2R)-3-phosphoglycerate + 2 H(+). Functionally, ruBisCO catalyzes two reactions: the carboxylation of D-ribulose 1,5-bisphosphate, the primary event in carbon dioxide fixation, as well as the oxidative fragmentation of the pentose substrate in the photorespiration process. Both reactions occur simultaneously and in competition at the same active site. The protein is Ribulose bisphosphate carboxylase large chain of Amaranthus hypochondriacus (Prince-of-Wales feather).